A 927-amino-acid polypeptide reads, in one-letter code: 2-oxoadipate dehydrogenase complex component E1 (927 aa).

It belongs to the alpha-ketoglutarate dehydrogenase family. The 2-oxoadipate dehydrogenase complex is composed of OADH (2-oxoadipate dehydrogenase; E1a), DLST (dihydrolipoamide succinyltransferase; E2) and DLD (dihydrolipoamide dehydrogenase; E3). E1a functional unit is a dimer. It depends on thiamine diphosphate as a cofactor.

Its subcellular location is the mitochondrion. The catalysed reaction is N(6)-[(R)-lipoyl]-L-lysyl-[protein] + 2-oxoadipate + H(+) = N(6)-[(R)-S(8)-glutaryldihydrolipoyl]-L-lysyl-[protein] + CO2. It participates in amino-acid degradation. Its function is as follows. 2-oxoadipate dehydrogenase (E1a) component of the 2-oxoadipate dehydrogenase complex (OADHC). Participates in the first step, rate limiting for the overall conversion of 2-oxoadipate (alpha-ketoadipate) to glutaryl-CoA and CO(2) catalyzed by the whole OADHC. Catalyzes the irreversible decarboxylation of 2-oxoadipate via the thiamine diphosphate (ThDP) cofactor and subsequent transfer of the decarboxylated acyl intermediate on an oxidized dihydrolipoyl group that is covalently amidated to the E2 enzyme (dihydrolipoyllysine-residue succinyltransferase or DLST). Can catalyze the decarboxylation of 2-oxoglutarate in vitro, but at a much lower rate than 2-oxoadipate. Responsible for the last step of L-lysine, L-hydroxylysine and L-tryptophan catabolism with the common product being 2-oxoadipate. This Xenopus laevis (African clawed frog) protein is 2-oxoadipate dehydrogenase complex component E1 (dhtkd1).